A 202-amino-acid polypeptide reads, in one-letter code: Small ribosomal subunit protein uS4 (202 aa).

The interval 22–48 (TGKELARRPYAPGDHGQGRRGKLSEYG) is disordered. An S4 RNA-binding domain is found at 93 to 154 (RRLDNMVYRL…KSKKLAVITG (62 aa)).

It belongs to the universal ribosomal protein uS4 family. Part of the 30S ribosomal subunit. Contacts protein S5. The interaction surface between S4 and S5 is involved in control of translational fidelity.

In terms of biological role, one of the primary rRNA binding proteins, it binds directly to 16S rRNA where it nucleates assembly of the body of the 30S subunit. Functionally, with S5 and S12 plays an important role in translational accuracy. The polypeptide is Small ribosomal subunit protein uS4 (Lactiplantibacillus plantarum (strain ATCC BAA-793 / NCIMB 8826 / WCFS1) (Lactobacillus plantarum)).